Here is a 206-residue protein sequence, read N- to C-terminus: Small ribosomal subunit protein uS4 (206 aa).

Residues 18–44 form a disordered region; it reads NIWGRPKSPVNRREYGPGQHGQRRKGK. Residues 94–157 form the S4 RNA-binding domain; sequence RRLDAVVYRA…KQLAVVLEAV (64 aa).

Belongs to the universal ribosomal protein uS4 family. Part of the 30S ribosomal subunit. Contacts protein S5. The interaction surface between S4 and S5 is involved in control of translational fidelity.

One of the primary rRNA binding proteins, it binds directly to 16S rRNA where it nucleates assembly of the body of the 30S subunit. In terms of biological role, with S5 and S12 plays an important role in translational accuracy. The chain is Small ribosomal subunit protein uS4 from Jannaschia sp. (strain CCS1).